Consider the following 174-residue polypeptide: Inosine/xanthosine triphosphatase (174 aa).

Residue Asp68 coordinates Mg(2+). Position 68–69 (68–69 (DA)) interacts with substrate.

The protein belongs to the YjjX NTPase family. In terms of assembly, homodimer. Mg(2+) serves as cofactor. Mn(2+) is required as a cofactor.

It catalyses the reaction XTP + H2O = XDP + phosphate + H(+). The enzyme catalyses ITP + H2O = IDP + phosphate + H(+). In terms of biological role, phosphatase that hydrolyzes non-canonical purine nucleotides such as XTP and ITP to their respective diphosphate derivatives. Probably excludes non-canonical purines from DNA/RNA precursor pool, thus preventing their incorporation into DNA/RNA and avoiding chromosomal lesions. This is Inosine/xanthosine triphosphatase from Photobacterium profundum (strain SS9).